A 1926-amino-acid polypeptide reads, in one-letter code: Rho GTPase-activating protein 21-A (1926 aa).

A disordered region spans residues 1–41 (MATRRAIVPEQQQEPSSPASEISKNKDGQEQSEMVSPMEEE). Positions 10–22 (EQQQEPSSPASEI) are enriched in polar residues. One can recognise a PDZ domain in the interval 77 to 162 (HTSIKDEENG…TLELSVMPKD (86 aa)). 6 disordered regions span residues 211–236 (VEVPPSGTSLAKQQSSRPVRTATTQP), 353–378 (PTAQAEGSPSPTNHYSSPGPHQQIDW), 416–487 (TDYN…RSES), 571–592 (QPTRQNSYRSPHPRPAVSDRSG), 640–704 (FQRK…DSDA), and 868–905 (GKLGLKQGSSLKGVQARENVPSSEDSESRKDSSSDVFS). 3 stretches are compositionally biased toward polar residues: residues 216–236 (SGTSLAKQQSSRPVRTATTQP), 353–372 (PTAQAEGSPSPTNHYSSPGP), and 416–429 (TDYNQMLPNHFSGQ). Low complexity predominate over residues 441–451 (QQSVQMRQRSV). Residues 452-466 (SQERLEDPVLMKEWP) show a composition bias toward basic and acidic residues. Residues 468–479 (SASQDTLSSAVA) show a composition bias toward polar residues. A compositionally biased stretch (polar residues) spans 640-669 (FQRKTQTESASGFQLDSVKTSMSASSSPPA). A PH domain is found at 906-1019 (DSNKEGFLYF…WIKAIQENGN (114 aa)). A compositionally biased stretch (polar residues) spans 1044-1064 (MSSASNKSEQSPKAPRQTLSI). Residues 1044–1107 (MSSASNKSEQ…SPPKDKGSWR (64 aa)) are disordered. The span at 1083–1105 (PKQESERRLFSKDDISPPKDKGS) shows a compositional bias: basic and acidic residues. A Rho-GAP domain is found at 1126 to 1318 (VRLDDCPPAH…TLIQKHDWFF (193 aa)). Disordered regions lie at residues 1330-1381 (VHEE…SGKD), 1396-1416 (ASRKRKKPKDKPQPSSSEDEL), 1512-1540 (QMEESMSDSGTMLSNSSQASAQRSKPKVV), 1573-1598 (LDPNPISPEVQSVAESKGEEADDERS), 1626-1658 (RQHRSKEEDPPRNVQANAEGSPSCTEGSITPRL), and 1827-1915 (STSE…LSGT). Residues 1512–1534 (QMEESMSDSGTMLSNSSQASAQR) are compositionally biased toward polar residues. Composition is skewed to polar residues over residues 1639–1653 (VQANAEGSPSCTEGS) and 1866–1902 (TADIPTGSESPSLGTAPQSDDQMNGDSFQSKNKNNFS).

The protein resides in the golgi apparatus membrane. The protein localises to the cell junction. Its subcellular location is the cytoplasmic vesicle membrane. It is found in the cytoplasm. It localises to the cytoskeleton. In terms of biological role, GTPase-activating protein (GAP) for rhoa and cdc42. In Xenopus laevis (African clawed frog), this protein is Rho GTPase-activating protein 21-A (arhgap21-a).